We begin with the raw amino-acid sequence, 183 residues long: Adenine phosphoribosyltransferase (183 aa).

Belongs to the purine/pyrimidine phosphoribosyltransferase family. In terms of assembly, homodimer.

The protein resides in the cytoplasm. The enzyme catalyses AMP + diphosphate = 5-phospho-alpha-D-ribose 1-diphosphate + adenine. Its pathway is purine metabolism; AMP biosynthesis via salvage pathway; AMP from adenine: step 1/1. In terms of biological role, catalyzes a salvage reaction resulting in the formation of AMP, that is energically less costly than de novo synthesis. The sequence is that of Adenine phosphoribosyltransferase from Shewanella halifaxensis (strain HAW-EB4).